Consider the following 235-residue polypeptide: MLTRKQHELLMFIHERIKESGVSPSFDEMKEALDLASKSGIHRLITALEERGFIRRLAHRARALEVVKLPQQATTAAPPKGRGAFRPQVLEGGGQAPTTSAQPQMAADNSRELPILGRIAAGTPIDAIQHERERLPVPESMLGAGEHYVLEVQGDSMIEAGILDGDYVIIKKGDTANSGEIVVALVGEEATLKRLRKKGGSIALEAANPKYETRIFGPDQVEVQGKLVGLIRRYH.

Residues 26-46 (FDEMKEALDLASKSGIHRLIT) constitute a DNA-binding region (H-T-H motif). The disordered stretch occupies residues 72-104 (QATTAAPPKGRGAFRPQVLEGGGQAPTTSAQPQ). Catalysis depends on for autocatalytic cleavage activity residues Ser156 and Lys193.

The protein belongs to the peptidase S24 family. Homodimer.

It catalyses the reaction Hydrolysis of Ala-|-Gly bond in repressor LexA.. Functionally, represses a number of genes involved in the response to DNA damage (SOS response), including recA and lexA. In the presence of single-stranded DNA, RecA interacts with LexA causing an autocatalytic cleavage which disrupts the DNA-binding part of LexA, leading to derepression of the SOS regulon and eventually DNA repair. This is LexA repressor from Caulobacter sp. (strain K31).